Here is a 322-residue protein sequence, read N- to C-terminus: Acetyl-coenzyme A carboxylase carboxyl transferase subunit alpha (322 aa).

The CoA carboxyltransferase C-terminal domain maps to 43–297 (ALKSKSNALT…KEVLTQQLNK (255 aa)).

The protein belongs to the AccA family. In terms of assembly, acetyl-CoA carboxylase is a heterohexamer composed of biotin carboxyl carrier protein (AccB), biotin carboxylase (AccC) and two subunits each of ACCase subunit alpha (AccA) and ACCase subunit beta (AccD).

The protein localises to the cytoplasm. It catalyses the reaction N(6)-carboxybiotinyl-L-lysyl-[protein] + acetyl-CoA = N(6)-biotinyl-L-lysyl-[protein] + malonyl-CoA. It participates in lipid metabolism; malonyl-CoA biosynthesis; malonyl-CoA from acetyl-CoA: step 1/1. Functionally, component of the acetyl coenzyme A carboxylase (ACC) complex. First, biotin carboxylase catalyzes the carboxylation of biotin on its carrier protein (BCCP) and then the CO(2) group is transferred by the carboxyltransferase to acetyl-CoA to form malonyl-CoA. This Vesicomyosocius okutanii subsp. Calyptogena okutanii (strain HA) protein is Acetyl-coenzyme A carboxylase carboxyl transferase subunit alpha.